A 371-amino-acid chain; its full sequence is MGEGDAFWAPSVLPHSTLSTLSHHPQPQFGRRMESKVSEGGLNVTLTIRLLMHGKEVGSIIGKKGETVKKMREESGARINISEGNCPERIVTITGPTDAIFKAFAMIAYKFEEDIINSMSNSPATSKPPVTLRLVVPASQCGSLIGKGGSKIKEIRESTGAQVQVAGDMLPNSTERAVTISGTPDAIIQCVKQICVVMLESPPKGATIPYRPKPASTPVIFAGGQAYTIQGQYAIPHPDQLTKLHQLAMQQTPFPPLGQTNPAFPGEKLPLHSSEEAQNLMGQSSGLDASPPASTHELTIPNDLIGCIIGRQGTKINEIRQMSGAQIKIANATEGSSERQITITGTPANISLAQYLINARLTSEVTGMGTL.

KH domains are found at residues 45 to 95, 129 to 182, and 293 to 357; these read TLTI…TITG, PVTL…TISG, and ASTH…QYLI.

Its subcellular location is the cytoplasm. In terms of biological role, single-stranded nucleic acid binding protein that binds preferentially to oligo dC. This chain is Poly(rC)-binding protein 3, found in Homo sapiens (Human).